Reading from the N-terminus, the 976-residue chain is Mast/stem cell growth factor receptor Kit (976 aa).

The N-terminal stretch at 1–25 (MRGARGAWDFLCVLLLLLRVQTGSS) is a signal peptide. Residues 26-524 (QPSVSPGEPS…QIHPHTLFTP (499 aa)) lie on the Extracellular side of the membrane. Ig-like C2-type domains are found at residues 27–112 (PSVS…VFVR), 121–205 (DRSL…LKVR), 212–308 (PVVS…LEVV), 317–410 (PMIN…VYVN), and 413–507 (PEIL…FNFA). C58 and C97 are oxidised to a cystine. N-linked (GlcNAc...) asparagine glycans are attached at residues N130 and N145. 3 disulfide bridges follow: C136–C186, C151–C183, and C233–C290. N-linked (GlcNAc...) asparagine glycans are attached at residues N283, N293, N300, N320, N352, N367, N463, and N486. A disulfide bridge connects residues C428 and C491. The chain crosses the membrane as a helical span at residues 525–545 (LLIGFVIVAGMMCIIVMILTY). Topologically, residues 546-976 (KYLQKPMYEV…SQPLLVHDDV (431 aa)) are cytoplasmic. 4 positions are modified to phosphotyrosine; by autocatalysis: Y547, Y553, Y568, and Y570. Y568 is a Mg(2+) binding site. Positions 568 to 570 (YVY) are important for interaction with phosphotyrosine-binding proteins. The Protein kinase domain occupies 589–937 (LSFGKTLGAG…ISESTNHIYS (349 aa)). ATP is bound by residues 596–603 (GAGAFGKV), K623, and 671–677 (EYCCYGD). Phosphotyrosine; by autocatalysis is present on residues Y703, Y721, and Y730. Phosphoserine; by PKC/PRKCA is present on residues S741 and S746. The Proton acceptor role is filled by D792. Residue R796 participates in ATP binding. Mg(2+)-binding residues include N797 and D810. S821 is modified (phosphoserine). Residue Y823 is modified to Phosphotyrosine; by autocatalysis. Phosphoserine is present on S891. Phosphotyrosine; by autocatalysis is present on residues Y900 and Y936. S959 is modified (phosphoserine).

Belongs to the protein kinase superfamily. Tyr protein kinase family. CSF-1/PDGF receptor subfamily. As to quaternary structure, monomer in the absence of bound KITLG/SCF. Homodimer in the presence of bound KITLG/SCF, forming a heterotetramer with two KITLG/SCF molecules. Interacts (via phosphorylated tyrosine residues) with the adapter proteins GRB2 and GRB7 (via SH2 domain), and SH2B2/APS. Interacts (via C-terminus) with MPDZ (via the tenth PDZ domain). Interacts (via phosphorylated tyrosine residues) with PIK3R1 and PIK3 catalytic subunit. Interacts (via phosphorylated tyrosine) with CRK (isoform Crk-II), FYN, SHC1 and MATK/CHK (via SH2 domain). Interacts with LYN and FES/FPS. Interacts (via phosphorylated tyrosine residues) with the protein phosphatases PTPN6/SHP-1 (via SH2 domain), PTPN11/SHP-2 (via SH2 domain) and PTPRU. Interacts with PLCG1. Interacts with DOK1 and TEC. Interacts (KITLG/SCF-bound) with IL1RL1. Interacts with IL1RAP (independent of stimulation with KITLG/SCF). A mast cell-specific KITLG/SCF-induced interleukin-33 signaling complex contains IL1RL1, IL1RAP, KIT and MYD88. Ubiquitinated by SOCS6. KIT is rapidly ubiquitinated after autophosphorylation induced by KITLG/SCF binding, leading to internalization and degradation. Post-translationally, autophosphorylated on tyrosine residues. KITLG/SCF binding enhances autophosphorylation. Isoform 1 shows low levels of tyrosine phosphorylation in the absence of added KITLG/SCF (in vitro). Kinase activity is down-regulated by phosphorylation on serine residues by protein kinase C family members. Phosphorylation at Tyr-568 is required for interaction with PTPN11/SHP-2, CRK (isoform Crk-II) and members of the SRC tyrosine-protein kinase family. Phosphorylation at Tyr-570 is required for interaction with PTPN6/SHP-1. Phosphorylation at Tyr-703, Tyr-823 and Tyr-936 is important for interaction with GRB2. Phosphorylation at Tyr-721 is important for interaction with PIK3R1. Phosphorylation at Tyr-823 and Tyr-936 is important for interaction with GRB7. As to expression, in testis, detected in spermatogonia in the basal layer and in interstitial Leydig cells but not in Sertoli cells or spermatocytes inside the seminiferous tubules (at protein level). Expression is maintained in ejaculated spermatozoa (at protein level).

It localises to the cell membrane. The protein resides in the cytoplasm. It catalyses the reaction L-tyrosyl-[protein] + ATP = O-phospho-L-tyrosyl-[protein] + ADP + H(+). Present in an inactive conformation in the absence of bound ligand. KITLG/SCF binding leads to dimerization and activation by autophosphorylation on tyrosine residues. Activity is down-regulated by PRKCA-mediated phosphorylation on serine residues. Inhibited by imatinib/STI-571 (Gleevec) and sunitinib; these compounds maintain the kinase in an inactive conformation. Functionally, tyrosine-protein kinase that acts as a cell-surface receptor for the cytokine KITLG/SCF and plays an essential role in the regulation of cell survival and proliferation, hematopoiesis, stem cell maintenance, gametogenesis, mast cell development, migration and function, and in melanogenesis. In response to KITLG/SCF binding, KIT can activate several signaling pathways. Phosphorylates PIK3R1, PLCG1, SH2B2/APS and CBL. Activates the AKT1 signaling pathway by phosphorylation of PIK3R1, the regulatory subunit of phosphatidylinositol 3-kinase. Activated KIT also transmits signals via GRB2 and activation of RAS, RAF1 and the MAP kinases MAPK1/ERK2 and/or MAPK3/ERK1. Promotes activation of STAT family members STAT1, STAT3, STAT5A and STAT5B. Activation of PLCG1 leads to the production of the cellular signaling molecules diacylglycerol and inositol 1,4,5-trisphosphate. KIT signaling is modulated by protein phosphatases, and by rapid internalization and degradation of the receptor. Activated KIT promotes phosphorylation of the protein phosphatases PTPN6/SHP-1 and PTPRU, and of the transcription factors STAT1, STAT3, STAT5A and STAT5B. Promotes phosphorylation of PIK3R1, CBL, CRK (isoform Crk-II), LYN, MAPK1/ERK2 and/or MAPK3/ERK1, PLCG1, SRC and SHC1. In Homo sapiens (Human), this protein is Mast/stem cell growth factor receptor Kit (KIT).